The primary structure comprises 419 residues: Serine hydroxymethyltransferase (419 aa).

(6S)-5,6,7,8-tetrahydrofolate-binding positions include Leu-121 and 125-127 (GHL). The residue at position 230 (Lys-230) is an N6-(pyridoxal phosphate)lysine. Position 355–357 (355–357 (SPF)) interacts with (6S)-5,6,7,8-tetrahydrofolate.

Belongs to the SHMT family. Homodimer. Pyridoxal 5'-phosphate is required as a cofactor.

The protein resides in the cytoplasm. It catalyses the reaction (6R)-5,10-methylene-5,6,7,8-tetrahydrofolate + glycine + H2O = (6S)-5,6,7,8-tetrahydrofolate + L-serine. It participates in one-carbon metabolism; tetrahydrofolate interconversion. The protein operates within amino-acid biosynthesis; glycine biosynthesis; glycine from L-serine: step 1/1. Functionally, catalyzes the reversible interconversion of serine and glycine with tetrahydrofolate (THF) serving as the one-carbon carrier. This reaction serves as the major source of one-carbon groups required for the biosynthesis of purines, thymidylate, methionine, and other important biomolecules. Also exhibits THF-independent aldolase activity toward beta-hydroxyamino acids, producing glycine and aldehydes, via a retro-aldol mechanism. This Streptococcus uberis (strain ATCC BAA-854 / 0140J) protein is Serine hydroxymethyltransferase.